The primary structure comprises 313 residues: Homoserine kinase (313 aa).

ATP is bound at residue 92-102 (PPGRGLGSSGA).

It belongs to the GHMP kinase family. Homoserine kinase subfamily.

It is found in the cytoplasm. It carries out the reaction L-homoserine + ATP = O-phospho-L-homoserine + ADP + H(+). It functions in the pathway amino-acid biosynthesis; L-threonine biosynthesis; L-threonine from L-aspartate: step 4/5. Its function is as follows. Catalyzes the ATP-dependent phosphorylation of L-homoserine to L-homoserine phosphate. The polypeptide is Homoserine kinase (Aeropyrum pernix (strain ATCC 700893 / DSM 11879 / JCM 9820 / NBRC 100138 / K1)).